The sequence spans 320 residues: MIIMRNYKFKLEPLKQCQEAFKRYTVHSTALYIIALQANWSRRLIYKLSLYFCKIKNCYTTFKFEQSNRFIITKAERIIKIQHLIRFKDIVNNFISLINILLVLIFCINLSGCNASKKLSYSNKYSYKELSKDDPHNLTYIGHYKVGKNYKIKGKIYKPHTPKYFTETGYASWYGGRKDGFHGKTTANGDRFNRNLLTAAHKTLPLPCLVKVTNKVNNKSVILMVNDRGPFKKNRIIDVSQKAAEILAFKNQGVTKVRIEYLPNETEKFLKKINLKKPENKTFAKNHKKSLFTQITKNNQCSINCHIKLVNLKYKLAVNP.

Belongs to the RlpA family.

Lytic transglycosylase with a strong preference for naked glycan strands that lack stem peptides. This is Endolytic peptidoglycan transglycosylase RlpA from Rickettsia prowazekii (strain Madrid E).